A 427-amino-acid polypeptide reads, in one-letter code: C4-dicarboxylate transport protein (427 aa).

A run of 9 helical transmembrane segments spans residues Ile-5 to His-25, Leu-44 to Met-64, Ile-76 to Val-96, Ile-142 to Phe-162, Val-184 to Phe-206, Leu-222 to Ala-242, Ile-307 to Phe-327, Ile-330 to Gly-350, and Ile-352 to Ile-372.

The protein belongs to the dicarboxylate/amino acid:cation symporter (DAACS) (TC 2.A.23) family.

It is found in the cell inner membrane. In terms of biological role, responsible for the transport of dicarboxylates such as succinate, fumarate, and malate from the periplasm across the membrane. This Aeromonas salmonicida (strain A449) protein is C4-dicarboxylate transport protein.